We begin with the raw amino-acid sequence, 432 residues long: Anaerobic glycerol-3-phosphate dehydrogenase subunit B (432 aa).

The protein belongs to the anaerobic G-3-P dehydrogenase subunit B family. In terms of assembly, composed of a catalytic GlpA/B dimer and of membrane bound GlpC. FMN serves as cofactor.

The enzyme catalyses a quinone + sn-glycerol 3-phosphate = dihydroxyacetone phosphate + a quinol. It functions in the pathway polyol metabolism; glycerol degradation via glycerol kinase pathway; glycerone phosphate from sn-glycerol 3-phosphate (anaerobic route): step 1/1. Functionally, conversion of glycerol 3-phosphate to dihydroxyacetone. Uses fumarate or nitrate as electron acceptor. The sequence is that of Anaerobic glycerol-3-phosphate dehydrogenase subunit B from Haemophilus influenzae (strain PittGG).